The primary structure comprises 311 residues: MIFVITVLSGGTGTPKLLQGLKRVVNNEELAVIVNTGEDTWIGDLYLSPDVDTVLYTLADLINEETWYGVKEDTFYTHEQLKNLGFDEVLRIGDKDRALKMHKTYYLKRGHKLSEVVDMEKVALGIKAKVIPMTDDRVETKILAKVDGKVDLLKFHDFWVKRKGDVEVLDVIYENSLYAKPCEKAVEAIKNSDLVIIGPSNPITSIGPILSLNGIKELLKDKKVVVVSPIVGNSAVSGPAGKLMKAKGYDVSVKGIYEFYKDIVDVLVIDNVDKEIAKEIPCEVLITNTIMKTLDDKVRLAKNIIEFCGSL.

7,8-didemethyl-8-hydroxy-5-deazariboflavin contacts are provided by Asp-52 and Arg-91.

The protein belongs to the CofD family. As to quaternary structure, homodimer. Mg(2+) is required as a cofactor.

It catalyses the reaction (2S)-lactyl-2-diphospho-5'-guanosine + 7,8-didemethyl-8-hydroxy-5-deazariboflavin = oxidized coenzyme F420-0 + GMP + H(+). It participates in cofactor biosynthesis; coenzyme F420 biosynthesis. Inhibited by EDTA in vitro. In terms of biological role, catalyzes the transfer of the 2-phospholactate moiety from (2S)-lactyl-2-diphospho-5'-guanosine to 7,8-didemethyl-8-hydroxy-5-deazariboflavin (FO) with the formation of oxidized coenzyme F420-0 and GMP. This chain is 2-phospho-L-lactate transferase, found in Methanocaldococcus jannaschii (strain ATCC 43067 / DSM 2661 / JAL-1 / JCM 10045 / NBRC 100440) (Methanococcus jannaschii).